Reading from the N-terminus, the 324-residue chain is Tetrachlorobenzoquinone reductase (324 aa).

Residues 5-107 (VSTIDMTVTQ…VPPANNFALV (103 aa)) form the FAD-binding FR-type domain. Residues 238 to 324 (FTVVLARRSG…SKSPRLVLDI (87 aa)) form the 2Fe-2S ferredoxin-type domain. 4 residues coordinate [2Fe-2S] cluster: Cys273, Cys278, Cys281, and Cys311.

Belongs to the PDR/VanB family. Homotrimer. The cofactor is FMN. [2Fe-2S] cluster serves as cofactor.

The enzyme catalyses 2,3,5,6-tetrachlorohydroquinone + NAD(+) + H(+) = 2,3,5,6-tetrachloro-1,4-benzoquinone + NADH. Its pathway is xenobiotic degradation; pentachlorophenol degradation. Its activity is regulated as follows. In vitro, activated by tetrachlorohydroquinone (TCHQ) at low concentrations and inhibited at high concentrations (above 200 uM). However, PcpD would only be stimulated by tetrachlorohydroquinone (TCHQ) under in vivo conditions due to the toxicity of tetrachlorohydroquinone (TCHQ). Competitively inhibited by pentachlorophenol (PCP) in a concentration-dependent manner. PcpD is regulated by tetrachlorohydroquinone (TCHQ) and pentachlorophenol (PCP) using a mechanism, which maintains tetrachlorobenzoquinone at a level that would neither significantly decrease the biodegradation of pentachlorophenol (PCP) nor cause cytotoxicity in cells. Involved in the degradation of the xenobiocide pentachlorophenol (PCP). Catalyzes the reduction of tetrachlorobenzoquinone (TCBQ) to yield tetrachlorohydroquinone (TCHQ). Also able to reduce 2,6-dichloroindophenol (DCIP). This is Tetrachlorobenzoquinone reductase from Sphingobium chlorophenolicum.